The chain runs to 159 residues: Cytochrome c-type biogenesis protein CcmE (159 aa).

Residues 1–8 (MNIRRKNR) lie on the Cytoplasmic side of the membrane. A helical; Signal-anchor for type II membrane protein transmembrane segment spans residues 9–29 (LWIACAVLAGLALTIGLVLYA). Topologically, residues 30-159 (LRSNIDLFYT…PASVYKDPAS (130 aa)) are periplasmic. The heme site is built by His-130 and Tyr-134. The span at 132-147 (ENYTPPEVEKAMEANH) shows a compositional bias: basic and acidic residues. A disordered region spans residues 132–159 (ENYTPPEVEKAMEANHRRPASVYKDPAS).

The protein belongs to the CcmE/CycJ family.

The protein localises to the cell inner membrane. Heme chaperone required for the biogenesis of c-type cytochromes. Transiently binds heme delivered by CcmC and transfers the heme to apo-cytochromes in a process facilitated by CcmF and CcmH. The chain is Cytochrome c-type biogenesis protein CcmE from Escherichia coli (strain 55989 / EAEC).